Consider the following 312-residue polypeptide: Methionyl-tRNA formyltransferase (312 aa).

(6S)-5,6,7,8-tetrahydrofolate is bound at residue 117–120; the sequence is SLLP.

This sequence belongs to the Fmt family.

The enzyme catalyses L-methionyl-tRNA(fMet) + (6R)-10-formyltetrahydrofolate = N-formyl-L-methionyl-tRNA(fMet) + (6S)-5,6,7,8-tetrahydrofolate + H(+). Its function is as follows. Attaches a formyl group to the free amino group of methionyl-tRNA(fMet). The formyl group appears to play a dual role in the initiator identity of N-formylmethionyl-tRNA by promoting its recognition by IF2 and preventing the misappropriation of this tRNA by the elongation apparatus. The polypeptide is Methionyl-tRNA formyltransferase (Bordetella parapertussis (strain 12822 / ATCC BAA-587 / NCTC 13253)).